Reading from the N-terminus, the 427-residue chain is Glucose-6-phosphate isomerase (427 aa).

Residue glutamate 281 is the Proton donor of the active site. Residues histidine 302 and lysine 417 contribute to the active site.

It belongs to the GPI family.

The protein resides in the cytoplasm. The catalysed reaction is alpha-D-glucose 6-phosphate = beta-D-fructose 6-phosphate. It functions in the pathway carbohydrate biosynthesis; gluconeogenesis. The protein operates within carbohydrate degradation; glycolysis; D-glyceraldehyde 3-phosphate and glycerone phosphate from D-glucose: step 2/4. In terms of biological role, catalyzes the reversible isomerization of glucose-6-phosphate to fructose-6-phosphate. The polypeptide is Glucose-6-phosphate isomerase (Mycoplasmopsis pulmonis (strain UAB CTIP) (Mycoplasma pulmonis)).